Here is a 180-residue protein sequence, read N- to C-terminus: Nucleoside-triphosphatase THEP1 (180 aa).

ATP is bound by residues 8 to 15 and 100 to 107; these read GPVGSIKA and VIIIDELG.

Belongs to the THEP1 NTPase family.

It carries out the reaction a ribonucleoside 5'-triphosphate + H2O = a ribonucleoside 5'-diphosphate + phosphate + H(+). Has nucleotide phosphatase activity towards ATP, GTP, CTP, TTP and UTP. May hydrolyze nucleoside diphosphates with lower efficiency. This chain is Nucleoside-triphosphatase THEP1, found in Picrophilus torridus (strain ATCC 700027 / DSM 9790 / JCM 10055 / NBRC 100828 / KAW 2/3).